A 229-amino-acid polypeptide reads, in one-letter code: Uracil-DNA glycosylase (229 aa).

Asp64 acts as the Proton acceptor in catalysis.

The protein belongs to the uracil-DNA glycosylase (UDG) superfamily. UNG family.

It is found in the cytoplasm. It catalyses the reaction Hydrolyzes single-stranded DNA or mismatched double-stranded DNA and polynucleotides, releasing free uracil.. Functionally, excises uracil residues from the DNA which can arise as a result of misincorporation of dUMP residues by DNA polymerase or due to deamination of cytosine. The polypeptide is Uracil-DNA glycosylase (Escherichia fergusonii (strain ATCC 35469 / DSM 13698 / CCUG 18766 / IAM 14443 / JCM 21226 / LMG 7866 / NBRC 102419 / NCTC 12128 / CDC 0568-73)).